Consider the following 133-residue polypeptide: FK506-binding protein 2 (133 aa).

Positions Met-1 to Gly-20 are cleaved as a signal peptide. Positions Gly-45–Asn-133 constitute a PPIase FKBP-type domain.

Belongs to the FKBP-type PPIase family.

The catalysed reaction is [protein]-peptidylproline (omega=180) = [protein]-peptidylproline (omega=0). With respect to regulation, inhibited by both FK506 and rapamycin. In terms of biological role, PPIases accelerate the folding of proteins by catalyzing the cis-trans isomerization of proline imidic peptide bonds in oligopeptides. The chain is FK506-binding protein 2 (fkbp2) from Dictyostelium discoideum (Social amoeba).